The sequence spans 188 residues: dCTP deaminase (188 aa).

Residues 111 to 116, 135 to 137, Gln156, Tyr170, Lys179, and Gln180 each bind dCTP; these read KSTYAR and TLE. Glu137 (proton donor/acceptor) is an active-site residue.

This sequence belongs to the dCTP deaminase family. As to quaternary structure, homotrimer.

The catalysed reaction is dCTP + H2O + H(+) = dUTP + NH4(+). It functions in the pathway pyrimidine metabolism; dUMP biosynthesis; dUMP from dCTP (dUTP route): step 1/2. In terms of biological role, catalyzes the deamination of dCTP to dUTP. The chain is dCTP deaminase from Rickettsia canadensis (strain McKiel).